The primary structure comprises 338 residues: Limbic system-associated membrane protein (338 aa).

Residues 1–28 form the signal peptide; that stretch reads MVARAQPDRKQLPLVLLRLLCLLPTGLP. 3 Ig-like C2-type domains span residues 29 to 122, 132 to 214, and 219 to 306; these read VRSV…PKTS, PKIS…VRVT, and PTIT…LYLY. N-linked (GlcNAc...) asparagine glycosylation is found at asparagine 40, asparagine 66, asparagine 136, and asparagine 148. The cysteines at positions 53 and 111 are disulfide-linked. 2 disulfide bridges follow: cysteine 153–cysteine 197 and cysteine 239–cysteine 290. 4 N-linked (GlcNAc...) asparagine glycosylation sites follow: asparagine 279, asparagine 287, asparagine 300, and asparagine 315. A lipid anchor (GPI-anchor amidated asparagine) is attached at asparagine 315. Residues 316 to 338 constitute a propeptide, removed in mature form; the sequence is GSVSLAVPLWLLAASLLCLLSKC.

Belongs to the immunoglobulin superfamily. IgLON family.

The protein localises to the cell membrane. Mediates selective neuronal growth and axon targeting. Probably serves as a recognition molecule for the formation of limbic connections. This Gallus gallus (Chicken) protein is Limbic system-associated membrane protein.